We begin with the raw amino-acid sequence, 122 residues long: Large ribosomal subunit protein uL18 (122 aa).

It belongs to the universal ribosomal protein uL18 family. In terms of assembly, part of the 50S ribosomal subunit; part of the 5S rRNA/L5/L18/L25 subcomplex. Contacts the 5S and 23S rRNAs.

Functionally, this is one of the proteins that bind and probably mediate the attachment of the 5S RNA into the large ribosomal subunit, where it forms part of the central protuberance. This Heliobacterium modesticaldum (strain ATCC 51547 / Ice1) protein is Large ribosomal subunit protein uL18.